A 155-amino-acid chain; its full sequence is Endoribonuclease YbeY (155 aa).

Zn(2+)-binding residues include His-120, His-124, and His-130.

This sequence belongs to the endoribonuclease YbeY family. The cofactor is Zn(2+).

The protein localises to the cytoplasm. Its function is as follows. Single strand-specific metallo-endoribonuclease involved in late-stage 70S ribosome quality control and in maturation of the 3' terminus of the 16S rRNA. The sequence is that of Endoribonuclease YbeY from Staphylococcus aureus (strain Mu3 / ATCC 700698).